The chain runs to 216 residues: LexA repressor (216 aa).

The segment at residues 28-48 (RAEIAAEFGFSSPNAAEEHLR) is a DNA-binding region (H-T-H motif). Catalysis depends on for autocatalytic cleavage activity residues Ser-134 and Lys-171.

The protein belongs to the peptidase S24 family. As to quaternary structure, homodimer.

It catalyses the reaction Hydrolysis of Ala-|-Gly bond in repressor LexA.. Its function is as follows. Represses a number of genes involved in the response to DNA damage (SOS response), including recA and lexA. In the presence of single-stranded DNA, RecA interacts with LexA causing an autocatalytic cleavage which disrupts the DNA-binding part of LexA, leading to derepression of the SOS regulon and eventually DNA repair. The chain is LexA repressor from Ralstonia nicotianae (strain ATCC BAA-1114 / GMI1000) (Ralstonia solanacearum).